The primary structure comprises 219 residues: Envelope protein US9 homolog (219 aa).

The Intravirion portion of the chain corresponds to 1-193; the sequence is MEKAEAAAVV…RHRRRRVALT (193 aa). The short motif at 145–146 is the Di-leucine internalization motif element; sequence LL. The acidic stretch occupies residues 153–168; it reads DYDSESGCYYSESDNE. Phosphoserine; by host CK2 occurs at positions 163 and 165. A helical; Signal-anchor for type II membrane protein membrane pass occupies residues 194–214; sequence VAGVILVVVLCAISGIVGAFL. The Virion surface segment spans residues 215–219; it reads ARVFP.

It belongs to the alphaherpesvirinae envelope protein US9 family. Phosphorylated on serines within the acidic cluster. Phosphorylation determines whether endocytosed viral US9 traffics to the trans-Golgi network or recycles to the cell membrane.

The protein resides in the virion membrane. It localises to the host Golgi apparatus membrane. It is found in the host smooth endoplasmic reticulum membrane. Its subcellular location is the host cell membrane. In terms of biological role, essential for the anterograde spread of the infection throughout the host nervous system. Together with the gE/gI heterodimer, US9 is involved in the sorting and transport of viral structural components toward axon tips. This is Envelope protein US9 homolog from Equine herpesvirus 1 (strain Kentucky A) (EHV-1).